Consider the following 428-residue polypeptide: Acylglycerol kinase, mitochondrial (428 aa).

The segment at 18 to 34 (STVGFCLLAYGSHWLYG) is hydrophobic. Residues 61–202 (SAIKKATVFL…LDVLQIKGEQ (142 aa)) form the DAGKc domain.

This sequence belongs to the AGK family. As to quaternary structure, component of the TIM22 complex. Requires Mg(2+) as cofactor.

The protein resides in the mitochondrion inner membrane. The protein localises to the mitochondrion intermembrane space. It catalyses the reaction a monoacylglycerol + ATP = a monoacyl-sn-glycero-3-phosphate + ADP + H(+). The enzyme catalyses a 1,2-diacyl-sn-glycerol + ATP = a 1,2-diacyl-sn-glycero-3-phosphate + ADP + H(+). The catalysed reaction is an N-acylsphing-4-enine + ATP = an N-acylsphing-4-enine 1-phosphate + ADP + H(+). It carries out the reaction 1-(9Z-octadecenoyl)-sn-glycerol + ATP = 1-(9Z-octadecenoyl)-sn-glycero-3-phosphate + ADP + H(+). It catalyses the reaction 1,2-di-(9Z-octadecenoyl)-sn-glycerol + ATP = 1,2-di-(9Z-octadecenoyl)-sn-glycero-3-phosphate + ADP + H(+). The enzyme catalyses a 1-acyl-sn-glycerol + ATP = a 1-acyl-sn-glycero-3-phosphate + ADP + H(+). The catalysed reaction is 1-hexadecanoyl-sn-glycerol + ATP = 1-hexadecanoyl-sn-glycero-3-phosphate + ADP + H(+). It carries out the reaction a 2-acylglycerol + ATP = a 2-acyl-sn-glycerol 3-phosphate + ADP + H(+). It catalyses the reaction 2-(5Z,8Z,11Z,14Z-eicosatetraenoyl)-glycerol + ATP = 2-(5Z,8Z,11Z,14Z-eicosatetraenoyl)-sn-glycero-3-phosphate + ADP + H(+). The enzyme catalyses 1-(5Z,8Z,11Z,14Z-eicosatetraenoyl)-sn-glycerol + ATP = 1-(5Z,8Z,11Z,14Z-eicosatetraenoyl)-sn-glycero-3-phosphate + ADP + H(+). The catalysed reaction is N-(hexanoyl)sphing-4-enine + ATP = N-hexanoylsphing-4-enine 1-phosphate + ADP + H(+). It functions in the pathway lipid metabolism; glycerolipid metabolism. In terms of biological role, lipid kinase that can phosphorylate both monoacylglycerol and diacylglycerol to form lysophosphatidic acid (LPA) and phosphatidic acid (PA), respectively. Phosphorylates ceramide but not sphingosine. Phosphorylates 1,2-dioleoylglycerol more rapidly than 2,3-dioleoylglycerol. Independently of its lipid kinase activity, acts as a component of the TIM22 complex. The TIM22 complex mediates the import and insertion of multi-pass transmembrane proteins into the mitochondrial inner membrane by forming a twin-pore translocase that uses the membrane potential as the external driving force. The polypeptide is Acylglycerol kinase, mitochondrial (Xenopus laevis (African clawed frog)).